The chain runs to 55 residues: Small ribosomal subunit protein bS21 (55 aa).

It belongs to the bacterial ribosomal protein bS21 family.

In Ureaplasma parvum serovar 3 (strain ATCC 27815 / 27 / NCTC 11736), this protein is Small ribosomal subunit protein bS21.